Consider the following 274-residue polypeptide: Thiamine kinase (274 aa).

This sequence belongs to the thiamine kinase family.

The catalysed reaction is thiamine + ATP = thiamine phosphate + ADP + H(+). Its pathway is cofactor biosynthesis; thiamine diphosphate biosynthesis; thiamine phosphate from thiamine: step 1/1. Catalyzes the ATP-dependent phosphorylation of thiamine to thiamine phosphate. Is involved in thiamine salvage. This is Thiamine kinase from Shigella sonnei (strain Ss046).